A 287-amino-acid polypeptide reads, in one-letter code: Protease HtpX (287 aa).

A run of 2 helical transmembrane segments spans residues 4 to 24 and 33 to 53; these read IFLL…VMSI and GGLL…SLAI. His-139 lines the Zn(2+) pocket. Residue Glu-140 is part of the active site. His-143 provides a ligand contact to Zn(2+). The next 2 helical transmembrane spans lie at 154–174 and 195–215; these read LIQG…AGII and AVVF…VAYF. Glu-220 is a Zn(2+) binding site.

The protein belongs to the peptidase M48B family. Requires Zn(2+) as cofactor.

Its subcellular location is the cell inner membrane. This is Protease HtpX from Shewanella frigidimarina (strain NCIMB 400).